A 279-amino-acid polypeptide reads, in one-letter code: Thymidylate synthase (279 aa).

A dUMP-binding site is contributed by 133 to 134; sequence RR. Residue cysteine 154 is the Nucleophile of the active site. DUMP-binding positions include 178–181, asparagine 189, and 219–221; these read RSND and HIY. Position 181 (aspartate 181) interacts with (6R)-5,10-methylene-5,6,7,8-tetrahydrofolate. Alanine 278 contributes to the (6R)-5,10-methylene-5,6,7,8-tetrahydrofolate binding site.

This sequence belongs to the thymidylate synthase family. Bacterial-type ThyA subfamily. As to quaternary structure, homodimer.

It localises to the cytoplasm. The enzyme catalyses dUMP + (6R)-5,10-methylene-5,6,7,8-tetrahydrofolate = 7,8-dihydrofolate + dTMP. Its pathway is pyrimidine metabolism; dTTP biosynthesis. In terms of biological role, catalyzes the reductive methylation of 2'-deoxyuridine-5'-monophosphate (dUMP) to 2'-deoxythymidine-5'-monophosphate (dTMP) while utilizing 5,10-methylenetetrahydrofolate (mTHF) as the methyl donor and reductant in the reaction, yielding dihydrofolate (DHF) as a by-product. This enzymatic reaction provides an intracellular de novo source of dTMP, an essential precursor for DNA biosynthesis. This is Thymidylate synthase from Streptococcus pneumoniae (strain ATCC 700669 / Spain 23F-1).